Consider the following 99-residue polypeptide: PE-PGRS family protein PE25 (99 aa).

Positions 1-92 (MSFVITNPEA…GADKYATAEA (92 aa)) constitute a PE domain. Ser2 carries the post-translational modification N-acetylserine.

This sequence belongs to the mycobacterial PE family. Forms a heterodimer with PPE41. The dimer forms a 1:1:1 heterotrimeric complex with EspG5. Interacts with PPE51.

The protein resides in the secreted. The PE25/PPE41 dimer induces both a strong humoral and cellular immune response. PE25 protein alone induces low response. The dimer induces necrosis, but not apoptosis, in mouse macrophage cells. It also induces activation and maturation of mouse dendritic cells and drives Th2-biased immune responses. The polypeptide is PE-PGRS family protein PE25 (Mycobacterium tuberculosis (strain ATCC 25618 / H37Rv)).